The sequence spans 234 residues: Ubiquitin domain-containing protein 2 (234 aa).

Residues M1 to T46 are disordered. Over residues H9–G21 the composition is skewed to polar residues. Positions L32–S41 are enriched in basic and acidic residues. Positions S152–Q227 constitute a Ubiquitin-like domain.

Its subcellular location is the cytoplasm. This chain is Ubiquitin domain-containing protein 2 (UBTD2), found in Bos taurus (Bovine).